Here is a 174-residue protein sequence, read N- to C-terminus: Large ribosomal subunit protein uL10 (174 aa).

This sequence belongs to the universal ribosomal protein uL10 family. Part of the ribosomal stalk of the 50S ribosomal subunit. The N-terminus interacts with L11 and the large rRNA to form the base of the stalk. The C-terminus forms an elongated spine to which L12 dimers bind in a sequential fashion forming a multimeric L10(L12)X complex.

Forms part of the ribosomal stalk, playing a central role in the interaction of the ribosome with GTP-bound translation factors. The protein is Large ribosomal subunit protein uL10 of Geotalea uraniireducens (strain Rf4) (Geobacter uraniireducens).